Consider the following 520-residue polypeptide: MAQVSRICNGVQNPSLISNLSKSSQRKSPLSVSLKTQQHPRAYPISSSWGLKKSGMTLIGSELRPLKVMSSVSTAEKASEIVLQPIREISGLIKLPGSKSLSNRILLLAALSEGTTVVDNLLNSDDINYMLDALKRLGLNVETDSENNRAVVEGCGGIFPASIDSKSDIELYLGNAGTAMRPLTAAVTAAGGNASYVLDGVPRMRERPIGDLVVGLKQLGADVECTLGTNCPPVRVNANGGLPGGKVKLSGSISSQYLTALLMSAPLALGDVEIEIVDKLISVPYVEMTLKLMERFGVSVEHSDSWDRFFVKGGQKYKSPGNAYVEGDASSASYFLAGAAITGETVTVEGCGTTSLQGDVKFAEVLEKMGCKVSWTENSVTVTGPPRDAFGMRHLRAIDVNMNKMPDVAMTLAVVALFADGPTTIRDVASWRVKETERMIAICTELRKLGATVEEGSDYCVITPPKKVKTAEIDTYDDHRMAMAFSLAACADVPITINDPGCTRKTFPDYFQVLERITKH.

Residues 1 to 76 (MAQVSRICNG…KVMSSVSTAE (76 aa)) constitute a chloroplast transit peptide. The segment at 20 to 39 (LSKSSQRKSPLSVSLKTQQH) is disordered. 3-phosphoshikimate contacts are provided by Lys99, Ser100, and Arg104. Phosphoenolpyruvate is bound at residue Lys99. Phosphoenolpyruvate contacts are provided by Gly177 and Arg207. 3-phosphoshikimate contacts are provided by Ser254, Ser255, Gln256, Ser282, Asp407, and Lys434. Residue Gln256 participates in phosphoenolpyruvate binding. The active-site Proton acceptor is the Asp407. Phosphoenolpyruvate contacts are provided by Arg438, Arg480, and Lys505.

This sequence belongs to the EPSP synthase family.

Its subcellular location is the plastid. It localises to the chloroplast. It carries out the reaction 3-phosphoshikimate + phosphoenolpyruvate = 5-O-(1-carboxyvinyl)-3-phosphoshikimate + phosphate. The protein operates within metabolic intermediate biosynthesis; chorismate biosynthesis; chorismate from D-erythrose 4-phosphate and phosphoenolpyruvate: step 6/7. Catalyzes the transfer of the enolpyruvyl moiety of phosphoenolpyruvate (PEP) to the 5-hydroxyl of shikimate-3-phosphate (S3P) to produce enolpyruvyl shikimate-3-phosphate and inorganic phosphate. In Arabidopsis thaliana (Mouse-ear cress), this protein is 3-phosphoshikimate 1-carboxyvinyltransferase, chloroplastic.